Here is a 613-residue protein sequence, read N- to C-terminus: Pescadillo homolog (613 aa).

Positions 259 to 344 (KELSNELETK…MKQIEHDIIX (86 aa)) form a coiled coil. A disordered region spans residues 268–333 (KESTEDNIIE…KNDQKNDQKN (66 aa)). Basic and acidic residues predominate over residues 278–333 (ENEKKTKNGKTENCEKNDQENEKKTKNDKTKNCEKNDQKNDQKNDQKNDQKNDQKN). Residues 350–453 (SVKNLFKNHI…MILSCEDYNI (104 aa)) form the BRCT domain. The segment at 485-517 (LSEDPQYNKSIQKNKTNSENKXNNYNDNENDMS) is disordered. Residues 492 to 601 (NKSIQKNKTN…ENRQKLTIEK (110 aa)) adopt a coiled-coil conformation. Residues 497 to 511 (KNKTNSENKXNNYND) show a composition bias toward low complexity.

This sequence belongs to the pescadillo family.

The protein localises to the nucleus. The protein resides in the nucleolus. Its subcellular location is the nucleoplasm. Its function is as follows. Required for maturation of ribosomal RNAs and formation of the large ribosomal subunit. The sequence is that of Pescadillo homolog from Plasmodium yoelii yoelii.